The primary structure comprises 438 residues: MIQNIVIIGTQWGDEGKGKIIDFLTPQVQYVVRYQGGHNAGHTIVVNHKKVTLHLIPSGILHDNIINIIAGGVVLSPVILVKEIQKLKKINVLVDDRIFISESCSLILPYHIAIDLAREKISTTVITNNNVIIGTTGCGIGPAYEDKVARRALRVYDLYNLKNFENKLKNIADFYNFQLVQYYHAEPIDYHVVMDEIITVSDILIKKVIDVPELLLNARKRGDKIIFEGAQGSLLDIDHGTYPYVTSSHTTSGGAIVGIGVGPKYIDYVLGIMKAYSTRVGNGPFPTELSGDIAEWLCTRGQEFGSTTGRRRRTGWFDAVSVRHAIKISSINSACLTKIDILDGLKYVKICVAYQSFNGEIIYNFPYSLENLKNITPVYEVLPGWSGRTTGIKKFNQLPLEAKQYIKRIEEVIGIPIDIISTGPDRLMNIIVRNPLNF.

GTP-binding positions include 13–19 and 41–43; these read GDEGKGK and GHT. D14 functions as the Proton acceptor in the catalytic mechanism. Mg(2+) contacts are provided by D14 and G41. IMP-binding positions include 14–17, 39–42, T136, R150, Q231, T246, and R310; these read DEGK and NAGH. The Proton donor role is filled by H42. 306 to 312 contacts substrate; sequence STTGRRR. Residues R312, 338–340, and 421–423 contribute to the GTP site; these read KID and STG.

The protein belongs to the adenylosuccinate synthetase family. As to quaternary structure, homodimer. Mg(2+) serves as cofactor.

Its subcellular location is the cytoplasm. It carries out the reaction IMP + L-aspartate + GTP = N(6)-(1,2-dicarboxyethyl)-AMP + GDP + phosphate + 2 H(+). It functions in the pathway purine metabolism; AMP biosynthesis via de novo pathway; AMP from IMP: step 1/2. Plays an important role in the de novo pathway of purine nucleotide biosynthesis. Catalyzes the first committed step in the biosynthesis of AMP from IMP. This Blochmanniella floridana protein is Adenylosuccinate synthetase.